A 167-amino-acid polypeptide reads, in one-letter code: Putative pre-16S rRNA nuclease (167 aa).

The disordered stretch occupies residues 1 to 24 (MVLTQHRVPDRPGDPDQDPGRGRR). Positions 7-21 (RVPDRPGDPDQDPGR) are enriched in basic and acidic residues.

It belongs to the YqgF nuclease family.

The protein localises to the cytoplasm. Its function is as follows. Could be a nuclease involved in processing of the 5'-end of pre-16S rRNA. This chain is Putative pre-16S rRNA nuclease, found in Mycolicibacterium paratuberculosis (strain ATCC BAA-968 / K-10) (Mycobacterium paratuberculosis).